A 160-amino-acid chain; its full sequence is SsrA-binding protein (160 aa).

Belongs to the SmpB family.

Its subcellular location is the cytoplasm. Its function is as follows. Required for rescue of stalled ribosomes mediated by trans-translation. Binds to transfer-messenger RNA (tmRNA), required for stable association of tmRNA with ribosomes. tmRNA and SmpB together mimic tRNA shape, replacing the anticodon stem-loop with SmpB. tmRNA is encoded by the ssrA gene; the 2 termini fold to resemble tRNA(Ala) and it encodes a 'tag peptide', a short internal open reading frame. During trans-translation Ala-aminoacylated tmRNA acts like a tRNA, entering the A-site of stalled ribosomes, displacing the stalled mRNA. The ribosome then switches to translate the ORF on the tmRNA; the nascent peptide is terminated with the 'tag peptide' encoded by the tmRNA and targeted for degradation. The ribosome is freed to recommence translation, which seems to be the essential function of trans-translation. This Citrobacter koseri (strain ATCC BAA-895 / CDC 4225-83 / SGSC4696) protein is SsrA-binding protein.